Here is a 31-residue protein sequence, read N- to C-terminus: Photosystem I reaction center subunit XII (31 aa).

A helical membrane pass occupies residues 6-25; the sequence is TQILAALVVALLPAFLAFRL.

It belongs to the PsaM family.

It localises to the cellular thylakoid membrane. This Synechocystis sp. (strain ATCC 27184 / PCC 6803 / Kazusa) protein is Photosystem I reaction center subunit XII.